We begin with the raw amino-acid sequence, 596 residues long: Protein FlbA (596 aa).

4 TPR repeats span residues Gly-91–His-124, Val-159–Ala-192, Ala-193–Phe-226, and Lys-228–Pro-260.

The chain is Protein FlbA (flbA) from Caulobacter vibrioides (strain ATCC 19089 / CIP 103742 / CB 15) (Caulobacter crescentus).